The following is a 340-amino-acid chain: Phosphate acyltransferase (340 aa).

This sequence belongs to the PlsX family. In terms of assembly, homodimer. Probably interacts with PlsY.

Its subcellular location is the cytoplasm. It catalyses the reaction a fatty acyl-[ACP] + phosphate = an acyl phosphate + holo-[ACP]. Its pathway is lipid metabolism; phospholipid metabolism. In terms of biological role, catalyzes the reversible formation of acyl-phosphate (acyl-PO(4)) from acyl-[acyl-carrier-protein] (acyl-ACP). This enzyme utilizes acyl-ACP as fatty acyl donor, but not acyl-CoA. The sequence is that of Phosphate acyltransferase from Pseudomonas syringae pv. tomato (strain ATCC BAA-871 / DC3000).